A 281-amino-acid polypeptide reads, in one-letter code: MGSCAQGFMLGCCLLLAITWGPILSLVPRVQEEQQEWEETEELPSPLDPVTRPEETREKYSPRQGEDLPTSRCYRCCDPSTPVYQTIPPPQINITILKGEKGDRGDRGLQGKYGKIGSTGPRGHVGPKGQKGSIGAPGNHCKSQYAAFSVGRKKALHSNDYFQPVVFDTEFVNLYKHFNMFTGKFYCYVPGIYFFSLNVHTWNQKETYLHIMKNEEEVVILYAQVSDRSIMQSQSLMMELREEDEVWVRLFKGERENAIFSDEFDTYITFSGYLVKPASEP.

Positions 1–25 (MGSCAQGFMLGCCLLLAITWGPILS) are cleaved as a signal peptide. The disordered stretch occupies residues 35–68 (QEWEETEELPSPLDPVTRPEETREKYSPRQGEDL). Residues 51–66 (TRPEETREKYSPRQGE) show a composition bias toward basic and acidic residues. Asn-93 carries N-linked (GlcNAc...) asparagine glycosylation. The Collagen-like domain occupies 99–140 (GEKGDRGDRGLQGKYGKIGSTGPRGHVGPKGQKGSIGAPGNH). Residues 107 to 136 (RGLQGKYGKIGSTGPRGHVGPKGQKGSIGA) are disordered. The C1q domain occupies 141–281 (CKSQYAAFSV…GYLVKPASEP (141 aa)).

It is found in the secreted. The polypeptide is Complement C1q tumor necrosis factor-related protein 1 (C1qtnf1) (Mus musculus (Mouse)).